A 281-amino-acid polypeptide reads, in one-letter code: NADPH-dependent 7-cyano-7-deazaguanine reductase (281 aa).

Substrate is bound at residue 81–83 (IES). 83 to 84 (SK) contacts NADPH. The active-site Thioimide intermediate is the cysteine 188. Residue aspartate 195 is the Proton donor of the active site. 227–228 (HE) contributes to the substrate binding site. An NADPH-binding site is contributed by 256 to 257 (RG).

This sequence belongs to the GTP cyclohydrolase I family. QueF type 2 subfamily. Homodimer.

It localises to the cytoplasm. The enzyme catalyses 7-aminomethyl-7-carbaguanine + 2 NADP(+) = 7-cyano-7-deazaguanine + 2 NADPH + 3 H(+). It functions in the pathway tRNA modification; tRNA-queuosine biosynthesis. Functionally, catalyzes the NADPH-dependent reduction of 7-cyano-7-deazaguanine (preQ0) to 7-aminomethyl-7-deazaguanine (preQ1). This chain is NADPH-dependent 7-cyano-7-deazaguanine reductase, found in Polaromonas naphthalenivorans (strain CJ2).